Here is a 634-residue protein sequence, read N- to C-terminus: Leucine--tRNA ligase subunit alpha (634 aa).

Residues 43–51 (PSGRIHMGH) carry the 'HIGH' region motif.

It belongs to the class-I aminoacyl-tRNA synthetase family. In terms of assembly, seems to consist of an alpha chain and a beta chain.

The protein localises to the cytoplasm. It carries out the reaction tRNA(Leu) + L-leucine + ATP = L-leucyl-tRNA(Leu) + AMP + diphosphate. In Aquifex aeolicus (strain VF5), this protein is Leucine--tRNA ligase subunit alpha (leuS).